The following is a 619-amino-acid chain: ESX-2 secretion system protein EccA2 (619 aa).

373–380 (GPPGTGKT) serves as a coordination point for ATP.

It belongs to the CbxX/CfxQ family. In terms of assembly, part of the ESX-2 / type VII secretion system (T7SS), which is composed of cytosolic and membrane components.

It localises to the cytoplasm. Its function is as follows. Part of an ESX-2 / type VII specialized secretion system (T7SS), which exports several proteins. May have ATPase activity and might provide energy for the export of ESX-2 substrates. In Mycobacterium bovis (strain ATCC BAA-935 / AF2122/97), this protein is ESX-2 secretion system protein EccA2.